We begin with the raw amino-acid sequence, 134 residues long: Ribosome-binding factor A (134 aa).

The protein belongs to the RbfA family. In terms of assembly, monomer. Binds 30S ribosomal subunits, but not 50S ribosomal subunits or 70S ribosomes.

The protein localises to the cytoplasm. Its function is as follows. One of several proteins that assist in the late maturation steps of the functional core of the 30S ribosomal subunit. Associates with free 30S ribosomal subunits (but not with 30S subunits that are part of 70S ribosomes or polysomes). Required for efficient processing of 16S rRNA. May interact with the 5'-terminal helix region of 16S rRNA. The chain is Ribosome-binding factor A from Bdellovibrio bacteriovorus (strain ATCC 15356 / DSM 50701 / NCIMB 9529 / HD100).